Reading from the N-terminus, the 111-residue chain is Elevenin (111 aa).

Residues 1-24 form the signal peptide; the sequence is MAPSQKALLVLVLSMLLTASDSRA. An intrachain disulfide couples cysteine 29 to cysteine 38. The propeptide occupies 44 to 111; that stretch reads KRGGDSLSVG…TEQLDRLLTL (68 aa).

It belongs to the elevenin family. As to quaternary structure, monomer. In terms of tissue distribution, expressed by the venom duct.

The protein resides in the secreted. Functionally, may mimic the function of prey elevenin neuropeptide. In vivo, intracranial injection in mice induces hyperactivity. The polypeptide is Elevenin (Conus ebraeus (Hebrew cone)).